A 263-amino-acid chain; its full sequence is Acidic leucine-rich nuclear phosphoprotein 32 family member A (263 aa).

LRR repeat units follow at residues 16 to 37, 39 to 60, 61 to 83, and 84 to 105; these read QIQELNLDNCRSTSIVGLTDEY, ALESLSLINVGLTTLKGFPKLP, NLKKLELSDNRISSGLNYLTTSP, and KLQYLNLSGNKIKDLETLKPLE. The 39-residue stretch at 118-156 folds into the LRRCT domain; sequence NDATQVDNYREKIFKMLPSLNFLDGFDCNDEEAQSEGDD. Acidic residues-rich tracts occupy residues 144–189 and 198–232; these read DCND…DGDN and YNDDLEEDNSDWEEGEGGGDDDEEDSDIDDADGEA. The interval 144 to 263 is disordered; the sequence is DCNDEEAQSE…ARGKKRKHDG (120 aa). The segment covering 242 to 254 has biased composition (basic and acidic residues); the sequence is SKKEPEKTDESQA.

It belongs to the ANP32 family. Phosphorylated on serine residues.

The protein localises to the nucleus. Its subcellular location is the cytoplasm. Its function is as follows. Implicated in a number of cellular processes, including proliferation, differentiation, caspase-dependent and caspase-independent apoptosis, suppression of transformation (tumor suppressor), inhibition of protein phosphatase 2A, regulation of mRNA trafficking and stability, and inhibition of acetyltransferases as part of the INHAT (inhibitor of histone acetyltransferases) complex. The chain is Acidic leucine-rich nuclear phosphoprotein 32 family member A (Anp32a) from Drosophila pseudoobscura pseudoobscura (Fruit fly).